We begin with the raw amino-acid sequence, 71 residues long: Frenatin 2.3S (71 aa).

The signal sequence occupies residues 1-22 (MAFLKKSLFLVLFLGLVSLSMG). The disordered stretch occupies residues 21–56 (MGEREKREEEEEEEEENKEEEANEEGKGESEEKRGL). The propeptide occupies 23 to 54 (EREKREEEEEEEEENKEEEANEEGKGESEEKR). The segment covering 28–43 (EEEEEEEEENKEEEAN) has biased composition (acidic residues). Positions 44–55 (EEGKGESEEKRG) are enriched in basic and acidic residues. G70 carries the glycine amide; in Frenatin 2.1S modification.

It belongs to the frog skin active peptide (FSAP) family. Frenatin subfamily. In terms of processing, frenatin 2.3S is not amidated. In terms of tissue distribution, expressed by the skin glands.

It is found in the secreted. Its function is as follows. Antimicrobial peptide with potent activity against Gram-negative bacteria. Shows immunostimulatory actions both in vitro and in vivo. In vitro, is cytotoxic to non-small cell lung adenocarcinoma A549 cells. Also, stimulates production of pro-inflammatory cytokines by mouse peritoneal macrophages and down-regulates production of the anti-inflammatory cytokine IL-10 by lipopolysaccharide (LPS)-stimulated cells. In vivo, intraperitoneal injection in mice enhances the activation state and homing capacity of Th1 type lymphocytes and promotes the recruitment, activation and tumoricidal capacities of peritoneal NK cells. Has a very weak activity in stimulation of insulin release and a weak hemolytic activity. Antimicrobial peptide with potent activity against some Gram-positive and Gram-negative bacteria. Has a multifunctional mode of action. It displays depolarization and bacterial cell leakage, and can also internalize into bacterial cells and alter specific gene expression involved in bacterial resistance mechanisms. Does not agglutinate bacteria and lipid vesicles, even a high concentrations. Also displays moderate cellular protection against yellow fever virus (YFV)-infected Vero cells without causing significant cytotoxicity. Shows a weak hemolytic activity, and is not cytotoxic to monocytes. Frenatin 2.3S (version without Gly-71) shows no or very weak antibacterial activity, shows no or very weak cytotoxicity to lung adenocarcinoma A549 cells and shows very weak hemolysis. It only stimulates production of pro-inflammatory cytokines IL-23 (but not IL-1beta and TNF-alpha) by mouse peritoneal macrophages and has no effect on the production of the anti-inflammatory cytokine IL-10. Frenatin 2.3S (version without Gly-71) very weakly stimulates insulin release. The sequence is that of Frenatin 2.3S from Sphaenorhynchus lacteus (Orinoco lime treefrog).